The following is a 369-amino-acid chain: Protein disulfide-isomerase erp38 (369 aa).

Residues 1–18 (MVLLKSLVVASLAAAVAA) form the signal peptide. Thioredoxin domains follow at residues 19-130 (KSAV…EKTG) and 131-251 (VKAR…EKAG). Residues Cys-50, Cys-53, Cys-170, and Cys-173 each act as nucleophile in the active site. 2 cysteine pairs are disulfide-bonded: Cys-50–Cys-53 and Cys-170–Cys-173. Residues 366 to 369 (KEEL) carry the Prevents secretion from ER motif.

The protein belongs to the protein disulfide isomerase family.

The protein resides in the endoplasmic reticulum lumen. The enzyme catalyses Catalyzes the rearrangement of -S-S- bonds in proteins.. The protein is Protein disulfide-isomerase erp38 (erp38) of Neurospora crassa (strain ATCC 24698 / 74-OR23-1A / CBS 708.71 / DSM 1257 / FGSC 987).